The primary structure comprises 132 residues: uncharacterized protein (132 aa).

The interval methionine 1–tyrosine 68 is disordered. The chain crosses the membrane as a helical span at residues valine 100–valine 120.

This sequence belongs to the FAM241 family.

Its subcellular location is the membrane. This is an uncharacterized protein from Homo sapiens (Human).